We begin with the raw amino-acid sequence, 356 residues long: 5-formaminoimidazole-4-carboxamide-1-(beta)-D-ribofuranosyl 5'-monophosphate synthetase 2 (356 aa).

His27 and Ser94 together coordinate 5-amino-1-(5-phospho-beta-D-ribosyl)imidazole-4-carboxamide. Residues Arg101 to Ser333 enclose the ATP-grasp domain. ATP contacts are provided by residues Pro145–Asp196 and Glu226. Asn255 provides a ligand contact to 5-amino-1-(5-phospho-beta-D-ribosyl)imidazole-4-carboxamide. Mg(2+)-binding residues include Glu293 and Glu306.

This sequence belongs to the phosphohexose mutase family. Mg(2+) is required as a cofactor. It depends on Mn(2+) as a cofactor.

It catalyses the reaction 5-amino-1-(5-phospho-beta-D-ribosyl)imidazole-4-carboxamide + formate + ATP = 5-formamido-1-(5-phospho-D-ribosyl)imidazole-4-carboxamide + ADP + phosphate. It participates in purine metabolism; IMP biosynthesis via de novo pathway; 5-formamido-1-(5-phospho-D-ribosyl)imidazole-4-carboxamide from 5-amino-1-(5-phospho-D-ribosyl)imidazole-4-carboxamide (formate route): step 1/1. In terms of biological role, catalyzes the ATP- and formate-dependent formylation of 5-aminoimidazole-4-carboxamide-1-beta-d-ribofuranosyl 5'-monophosphate (AICAR) to 5-formaminoimidazole-4-carboxamide-1-beta-d-ribofuranosyl 5'-monophosphate (FAICAR) in the absence of folates. This Methanosarcina mazei (strain ATCC BAA-159 / DSM 3647 / Goe1 / Go1 / JCM 11833 / OCM 88) (Methanosarcina frisia) protein is 5-formaminoimidazole-4-carboxamide-1-(beta)-D-ribofuranosyl 5'-monophosphate synthetase 2.